We begin with the raw amino-acid sequence, 155 residues long: MSIDVANESGVPADEERLARLARYILDALRVHPLAELSVLLVDEEPMADLHVRWMNEPGPTDVLSFPMDELRPGAPGRTSEPGILGDVVICPQVAARQAERAGHSMQDEIDLLCTHGILHLLGYDHAEPDEHREMFSLQNELLAGWRRSLEEEER.

Positions 116, 120, and 126 each coordinate Zn(2+).

It belongs to the endoribonuclease YbeY family. Zn(2+) serves as cofactor.

It localises to the cytoplasm. Its function is as follows. Single strand-specific metallo-endoribonuclease involved in late-stage 70S ribosome quality control and in maturation of the 3' terminus of the 16S rRNA. The chain is Endoribonuclease YbeY from Thermobifida fusca (strain YX).